The following is a 442-amino-acid chain: Probable protein phosphatase 2C 15 (442 aa).

Residues 35-303 enclose the PPM-type phosphatase domain; that stretch reads AAERPELQVG…DDTTCIVVDI (269 aa). 4 residues coordinate Mn(2+): aspartate 80, glycine 81, aspartate 255, and aspartate 294. Basic and acidic residues predominate over residues 420 to 434; that stretch reads KKEAMEGKRRSRDSS. The interval 420–442 is disordered; sequence KKEAMEGKRRSRDSSSRNSGSSE.

It belongs to the PP2C family. Mg(2+) is required as a cofactor. It depends on Mn(2+) as a cofactor.

It carries out the reaction O-phospho-L-seryl-[protein] + H2O = L-seryl-[protein] + phosphate. The enzyme catalyses O-phospho-L-threonyl-[protein] + H2O = L-threonyl-[protein] + phosphate. This is Probable protein phosphatase 2C 15 from Oryza sativa subsp. japonica (Rice).